A 572-amino-acid chain; its full sequence is Urease subunit alpha (572 aa).

In terms of domain architecture, Urease spans Gly133–Phe572. Ni(2+) is bound by residues His138, His140, and Lys221. An N6-carboxylysine modification is found at Lys221. A substrate-binding site is contributed by His223. Ni(2+)-binding residues include His250 and His276. His324 serves as the catalytic Proton donor. Ni(2+) is bound at residue Asp364.

This sequence belongs to the metallo-dependent hydrolases superfamily. Urease alpha subunit family. As to quaternary structure, heterotrimer of UreA (gamma), UreB (beta) and UreC (alpha) subunits. Three heterotrimers associate to form the active enzyme. Ni cation serves as cofactor. Carboxylation allows a single lysine to coordinate two nickel ions.

The protein localises to the cytoplasm. It catalyses the reaction urea + 2 H2O + H(+) = hydrogencarbonate + 2 NH4(+). Its pathway is nitrogen metabolism; urea degradation; CO(2) and NH(3) from urea (urease route): step 1/1. The polypeptide is Urease subunit alpha (Streptococcus thermophilus (strain CNRZ 1066)).